The chain runs to 138 residues: Acidic phospholipase A2 Cvv-E6a (138 aa).

A signal peptide spans 1-16; that stretch reads MRTLWIVAVLLLGVEG. 7 disulfides stabilise this stretch: C42–C131, C44–C60, C59–C111, C65–C138, C66–C104, C73–C97, and C91–C102. The Ca(2+) site is built by Y43, G45, and G47. H63 is an active-site residue. Residue D64 coordinates Ca(2+). D105 is an active-site residue.

Belongs to the phospholipase A2 family. Group II subfamily. D49 sub-subfamily. It depends on Ca(2+) as a cofactor. As to expression, expressed by the venom gland.

It is found in the secreted. It catalyses the reaction a 1,2-diacyl-sn-glycero-3-phosphocholine + H2O = a 1-acyl-sn-glycero-3-phosphocholine + a fatty acid + H(+). Snake venom phospholipase A2 (PLA2) that significantly inhibits ADP-induced platelet aggregation in platelet-rich plasma of human, rabbit and guinea pig. PLA2 catalyzes the calcium-dependent hydrolysis of the 2-acyl groups in 3-sn-phosphoglycerides. This chain is Acidic phospholipase A2 Cvv-E6a, found in Crotalus viridis viridis (Prairie rattlesnake).